Consider the following 369-residue polypeptide: Transaldolase (369 aa).

The active-site Schiff-base intermediate with substrate is lysine 140.

This sequence belongs to the transaldolase family. Type 2 subfamily.

The protein localises to the cytoplasm. It catalyses the reaction D-sedoheptulose 7-phosphate + D-glyceraldehyde 3-phosphate = D-erythrose 4-phosphate + beta-D-fructose 6-phosphate. The protein operates within carbohydrate degradation; pentose phosphate pathway; D-glyceraldehyde 3-phosphate and beta-D-fructose 6-phosphate from D-ribose 5-phosphate and D-xylulose 5-phosphate (non-oxidative stage): step 2/3. In terms of biological role, transaldolase is important for the balance of metabolites in the pentose-phosphate pathway. The sequence is that of Transaldolase from Parafrankia sp. (strain EAN1pec).